A 406-amino-acid polypeptide reads, in one-letter code: ATP phosphoribosyltransferase regulatory subunit (406 aa).

The protein belongs to the class-II aminoacyl-tRNA synthetase family. HisZ subfamily. In terms of assembly, heteromultimer composed of HisG and HisZ subunits.

Its subcellular location is the cytoplasm. It functions in the pathway amino-acid biosynthesis; L-histidine biosynthesis; L-histidine from 5-phospho-alpha-D-ribose 1-diphosphate: step 1/9. Functionally, required for the first step of histidine biosynthesis. May allow the feedback regulation of ATP phosphoribosyltransferase activity by histidine. This Methylococcus capsulatus (strain ATCC 33009 / NCIMB 11132 / Bath) protein is ATP phosphoribosyltransferase regulatory subunit.